We begin with the raw amino-acid sequence, 488 residues long: Katanin p60 ATPase-containing subunit A-like 1 (488 aa).

The interval 84–184 (FPNPVPEEGP…EQKKFDGTGY (101 aa)) is disordered. The span at 144–167 (KPDRPNTRDGRGNKAKEEKSKRNA) shows a compositional bias: basic and acidic residues. 246–253 (GPPGTGKT) contributes to the ATP binding site.

Belongs to the AAA ATPase family. Katanin p60 subunit A1 subfamily. A-like 1 sub-subfamily.

The protein localises to the cytoplasm. It is found in the cytoskeleton. Its subcellular location is the spindle pole. The protein resides in the spindle. The catalysed reaction is n ATP + n H2O + a microtubule = n ADP + n phosphate + (n+1) alpha/beta tubulin heterodimers.. Functionally, regulates microtubule dynamics in Sertoli cells, a process that is essential for spermiogenesis and male fertility. Severs microtubules in an ATP-dependent manner, promoting rapid reorganization of cellular microtubule arrays. This Danio rerio (Zebrafish) protein is Katanin p60 ATPase-containing subunit A-like 1 (katnal1).